Reading from the N-terminus, the 813-residue chain is Disintegrin and metalloproteinase domain-containing protein 33 (813 aa).

The signal sequence occupies residues 1–29 (MGWRPRRARGTPLLLLLLLLLLWPVPGAG). Residues 30 to 203 (VLQGHIPGQP…PGGPQSRGRR (174 aa)) constitute a propeptide that is removed on maturation. The Extracellular segment spans residues 30–701 (VLQGHIPGQP…GPVQAENHDT (672 aa)). N-linked (GlcNAc...) asparagine glycosylation occurs at Asn109. The Cysteine switch signature appears at 131 to 138 (CTCSGMSG). Zn(2+) is bound at residue Cys133. An N-linked (GlcNAc...) asparagine glycan is attached at Asn145. The tract at residues 184–205 (PGNKAGMTSLPGGPQSRGRREA) is disordered. Positions 210–409 (KYLELYIVAD…GGGACLSNAP (200 aa)) constitute a Peptidase M12B domain. N-linked (GlcNAc...) asparagine glycosylation is found at Asn231 and Asn276. 3 cysteine pairs are disulfide-bonded: Cys320-Cys404, Cys360-Cys388, and Cys361-Cys371. Residue His345 participates in Zn(2+) binding. Glu346 is a catalytic residue. Positions 349 and 355 each coordinate Zn(2+). The region spanning 417 to 503 (PALCGNGFVE…HCPPDVYLLD (87 aa)) is the Disintegrin domain. Asn448 is a glycosylation site (N-linked (GlcNAc...) asparagine). Cystine bridges form between Cys475/Cys495, Cys653/Cys663, Cys657/Cys669, and Cys671/Cys680. The EGF-like domain maps to 649–681 (ELQRCLTACHSHGVCNSNHNCHCAPGWAPPFCD). A helical transmembrane segment spans residues 702-722 (FLLAMLLSVLLPLLPGAGLAW). The Cytoplasmic segment spans residues 723–813 (CCYRLPGAHL…QVQMPRSCLW (91 aa)). Residues 746 to 813 (SGPKDGPHRD…QVQMPRSCLW (68 aa)) are disordered. A compositionally biased stretch (basic and acidic residues) spans 780-791 (ENSHEPSSHPEK).

The cofactor is Zn(2+). In terms of processing, the precursor is cleaved by a furin endopeptidase. As to expression, expressed in all tissues, except liver, with high expression in placenta, lung, spleen and veins.

The protein resides in the membrane. This Homo sapiens (Human) protein is Disintegrin and metalloproteinase domain-containing protein 33 (ADAM33).